The sequence spans 226 residues: PKHD-type hydroxylase Abu_0724 (226 aa).

In terms of domain architecture, Fe2OG dioxygenase spans 78–178 (HIISPFFNKY…RMVSFMWIQS (101 aa)). Fe cation is bound by residues His96, Asp98, and His159. Arg169 provides a ligand contact to 2-oxoglutarate.

Requires Fe(2+) as cofactor. It depends on L-ascorbate as a cofactor.

This chain is PKHD-type hydroxylase Abu_0724, found in Aliarcobacter butzleri (strain RM4018) (Arcobacter butzleri).